A 273-amino-acid polypeptide reads, in one-letter code: Undecaprenyl-diphosphatase (273 aa).

7 helical membrane-spanning segments follow: residues 4 to 24, 43 to 63, 82 to 102, 108 to 128, 183 to 203, 217 to 237, and 248 to 268; these read LILLKALLLGIVEGLTEFLPI, KAKVFTVAIQLGAILAVCWEY, FVINLFIAFLPAAILGLLFIK, LFHPMPVAIALVTGGILILWA, AAEFSFFLAIPVMFAATFYDV, MFATGSVAAFISALIAIRGFI, and FAWYRIGFGLIVLLTAYSGLV.

Belongs to the UppP family.

Its subcellular location is the cell inner membrane. It catalyses the reaction di-trans,octa-cis-undecaprenyl diphosphate + H2O = di-trans,octa-cis-undecaprenyl phosphate + phosphate + H(+). In terms of biological role, catalyzes the dephosphorylation of undecaprenyl diphosphate (UPP). Confers resistance to bacitracin. The chain is Undecaprenyl-diphosphatase from Nitrosomonas europaea (strain ATCC 19718 / CIP 103999 / KCTC 2705 / NBRC 14298).